A 314-amino-acid polypeptide reads, in one-letter code: Probable 5-dehydro-4-deoxyglucarate dehydratase (314 aa).

Belongs to the DapA family.

It carries out the reaction 5-dehydro-4-deoxy-D-glucarate + H(+) = 2,5-dioxopentanoate + CO2 + H2O. Its pathway is carbohydrate acid metabolism; D-glucarate degradation; 2,5-dioxopentanoate from D-glucarate: step 2/2. This is Probable 5-dehydro-4-deoxyglucarate dehydratase from Bradyrhizobium diazoefficiens (strain JCM 10833 / BCRC 13528 / IAM 13628 / NBRC 14792 / USDA 110).